The following is a 384-amino-acid chain: Formate-dependent phosphoribosylglycinamide formyltransferase (384 aa).

N(1)-(5-phospho-beta-D-ribosyl)glycinamide contacts are provided by residues 14 to 15 (EL) and Glu74. Residues Arg106, Lys147, 152-157 (SSGKGQ), 187-190 (EEFI), and Glu195 contribute to the ATP site. Positions 111–300 (RLAAETLHLP…EFALHVRAVL (190 aa)) constitute an ATP-grasp domain. Residues Glu259 and Glu271 each coordinate Mg(2+). N(1)-(5-phospho-beta-D-ribosyl)glycinamide-binding positions include Asp278, Lys348, and 355–356 (RR).

This sequence belongs to the PurK/PurT family. Homodimer.

It catalyses the reaction N(1)-(5-phospho-beta-D-ribosyl)glycinamide + formate + ATP = N(2)-formyl-N(1)-(5-phospho-beta-D-ribosyl)glycinamide + ADP + phosphate + H(+). The protein operates within purine metabolism; IMP biosynthesis via de novo pathway; N(2)-formyl-N(1)-(5-phospho-D-ribosyl)glycinamide from N(1)-(5-phospho-D-ribosyl)glycinamide (formate route): step 1/1. Its function is as follows. Involved in the de novo purine biosynthesis. Catalyzes the transfer of formate to 5-phospho-ribosyl-glycinamide (GAR), producing 5-phospho-ribosyl-N-formylglycinamide (FGAR). Formate is provided by PurU via hydrolysis of 10-formyl-tetrahydrofolate. This is Formate-dependent phosphoribosylglycinamide formyltransferase from Bacillus velezensis (strain DSM 23117 / BGSC 10A6 / LMG 26770 / FZB42) (Bacillus amyloliquefaciens subsp. plantarum).